The sequence spans 440 residues: NADH-quinone oxidoreductase subunit D 2 (440 aa).

Belongs to the complex I 49 kDa subunit family. As to quaternary structure, NDH-1 is composed of 14 different subunits. Subunits NuoB, C, D, E, F, and G constitute the peripheral sector of the complex.

It is found in the cell membrane. The enzyme catalyses a quinone + NADH + 5 H(+)(in) = a quinol + NAD(+) + 4 H(+)(out). NDH-1 shuttles electrons from NADH, via FMN and iron-sulfur (Fe-S) centers, to quinones in the respiratory chain. The immediate electron acceptor for the enzyme in this species is believed to be a menaquinone. Couples the redox reaction to proton translocation (for every two electrons transferred, four hydrogen ions are translocated across the cytoplasmic membrane), and thus conserves the redox energy in a proton gradient. The sequence is that of NADH-quinone oxidoreductase subunit D 2 from Streptomyces coelicolor (strain ATCC BAA-471 / A3(2) / M145).